Consider the following 149-residue polypeptide: Nucleoside diphosphate kinase (149 aa).

Positions 9, 57, 85, 91, 102, and 112 each coordinate ATP. His115 (pros-phosphohistidine intermediate) is an active-site residue.

This sequence belongs to the NDK family. Mg(2+) is required as a cofactor.

It is found in the cytoplasm. The catalysed reaction is a 2'-deoxyribonucleoside 5'-diphosphate + ATP = a 2'-deoxyribonucleoside 5'-triphosphate + ADP. The enzyme catalyses a ribonucleoside 5'-diphosphate + ATP = a ribonucleoside 5'-triphosphate + ADP. Functionally, major role in the synthesis of nucleoside triphosphates other than ATP. The ATP gamma phosphate is transferred to the NDP beta phosphate via a ping-pong mechanism, using a phosphorylated active-site intermediate. This chain is Nucleoside diphosphate kinase, found in Methanococcoides burtonii (strain DSM 6242 / NBRC 107633 / OCM 468 / ACE-M).